Reading from the N-terminus, the 397-residue chain is Subtilisin-like protease 12 (397 aa).

An N-terminal signal peptide occupies residues 1–19 (MSIFKLMVIYFTLFWVVNA). Positions 20-116 (AQLLDLDSHG…VEPNREMKAA (97 aa)) are excised as a propeptide. One can recognise an Inhibitor I9 domain in the interval 35–115 (YIVVMKNGVS…FVEPNREMKA (81 aa)). N-linked (GlcNAc...) asparagine glycosylation is found at asparagine 123, asparagine 136, and asparagine 150. In terms of domain architecture, Peptidase S8 spans 125-397 (TWGLARISHM…DKLLYNGSGA (273 aa)). Catalysis depends on charge relay system residues aspartate 157 and histidine 188. 3 N-linked (GlcNAc...) asparagine glycosylation sites follow: asparagine 249, asparagine 305, and asparagine 334. Catalysis depends on serine 343, which acts as the Charge relay system. Asparagine 385 and asparagine 393 each carry an N-linked (GlcNAc...) asparagine glycan.

The protein belongs to the peptidase S8 family.

The protein resides in the secreted. In terms of biological role, secreted subtilisin-like serine protease with keratinolytic activity that contributes to pathogenicity. The protein is Subtilisin-like protease 12 (SUB12) of Arthroderma gypseum (strain ATCC MYA-4604 / CBS 118893) (Microsporum gypseum).